A 441-amino-acid polypeptide reads, in one-letter code: Chitinase-like protein Idgf3 (441 aa).

The first 23 residues, 1-23 (MTGSLWLSLALSLAVLAQFKVSA), serve as a signal peptide directing secretion. The GH18 domain occupies 25-441 (PNLVCFYDSQ…MLRAIKYRLL (417 aa)). An intrachain disulfide couples Cys29 to Cys56. The N-linked (GlcNAc...) asparagine glycan is linked to Asn221. A disordered region spans residues 307–331 (KDSGDSGMPVVPSTQGPAPAGPQSK). Cysteines 342 and 425 form a disulfide.

It belongs to the glycosyl hydrolase 18 family. IDGF subfamily. Glycosylated. As to expression, primarily expressed in yolk cells and fat body. In larvae, it is expressed in small and large salivary gland cells, and weakly expressed in imaginal disks. Less expressed than Idgf2 and Idgf4.

It localises to the secreted. Cooperates with insulin-like peptides to stimulate the proliferation, polarization and motility of imaginal disk cells. May act by stabilizing the binding of insulin-like peptides to its receptor through a simultaneous interaction with both molecules to form a multiprotein signaling complex. This is Chitinase-like protein Idgf3 (Idgf3) from Drosophila melanogaster (Fruit fly).